The sequence spans 196 residues: HTH-type transcriptional regulator UidR (196 aa).

Residues 10–70 (QPTRTRILNA…AIILQDQERA (61 aa)) enclose the HTH tetR-type domain. Residues 33-52 (SMKAICKSCAISPGTLYHHF) constitute a DNA-binding region (H-T-H motif).

In terms of biological role, repressor for the uidRABC (gusRABC) operon. The sequence is that of HTH-type transcriptional regulator UidR (uidR) from Escherichia coli O157:H7.